A 370-amino-acid chain; its full sequence is UDP-3-O-acylglucosamine N-acyltransferase (370 aa).

His-252 functions as the Proton acceptor in the catalytic mechanism. The tract at residues 348–370 is disordered; it reads NAAAEKRDGPAPNAASKATGDKV.

The protein belongs to the transferase hexapeptide repeat family. LpxD subfamily. In terms of assembly, homotrimer.

It carries out the reaction a UDP-3-O-[(3R)-3-hydroxyacyl]-alpha-D-glucosamine + a (3R)-hydroxyacyl-[ACP] = a UDP-2-N,3-O-bis[(3R)-3-hydroxyacyl]-alpha-D-glucosamine + holo-[ACP] + H(+). It functions in the pathway bacterial outer membrane biogenesis; LPS lipid A biosynthesis. Catalyzes the N-acylation of UDP-3-O-acylglucosamine using 3-hydroxyacyl-ACP as the acyl donor. Is involved in the biosynthesis of lipid A, a phosphorylated glycolipid that anchors the lipopolysaccharide to the outer membrane of the cell. The sequence is that of UDP-3-O-acylglucosamine N-acyltransferase from Paraburkholderia phytofirmans (strain DSM 17436 / LMG 22146 / PsJN) (Burkholderia phytofirmans).